Reading from the N-terminus, the 280-residue chain is Chorismate mutase (280 aa).

The Chorismate mutase domain maps to 3-256 (FMKPETVLDL…EVDYLLRRLE (254 aa)). Positions 73, 74, 137, 139, and 140 each coordinate L-tyrosine. 3 residues coordinate L-tryptophan: N137, G139, and S140.

As to quaternary structure, homodimer.

It localises to the cytoplasm. The catalysed reaction is chorismate = prephenate. The protein operates within metabolic intermediate biosynthesis; prephenate biosynthesis; prephenate from chorismate: step 1/1. With respect to regulation, each dimer has two allosteric binding sites that can bind the regulatory effectors tryptophan or tyrosine. Can bind either one tryptophan or one tyrosine, two tryptophan or two tyrosine or one tryptophan and one tyrosine, which differentially affect the catalytic activity. Activated by tryptophan and subject to feedback inhibition by tyrosine. In the presence of both tryptophan and tyrosine, the enzyme is in the activated state. Catalyzes the Claisen rearrangement of chorismate to prephenate. Acts at the first branch point in the aromatic amino acid pathway where it steers biosynthesis towards phenylalanine and tyrosine, and away from tryptophan. This Pichia angusta (Yeast) protein is Chorismate mutase.